A 150-amino-acid chain; its full sequence is uncharacterized protein (150 aa).

A helical transmembrane segment spans residues 19–39; sequence SLGMCVILIDGLIVLTAAFVF.

It to B.subtilis YpjC, YqfU and YitT.

It localises to the cell membrane. This is an uncharacterized protein from Bacillus sp. (strain PS3).